The sequence spans 398 residues: tRNA-specific 2-thiouridylase MnmA (398 aa).

ATP contacts are provided by residues 20-27 (AMSGGVDS) and Leu46. Cys114 functions as the Nucleophile in the catalytic mechanism. Cys114 and Cys210 are joined by a disulfide. ATP is bound at residue Gly138. The tract at residues 160 to 162 (RDQ) is interaction with tRNA. The active-site Cysteine persulfide intermediate is Cys210.

The protein belongs to the MnmA/TRMU family.

Its subcellular location is the cytoplasm. The enzyme catalyses S-sulfanyl-L-cysteinyl-[protein] + uridine(34) in tRNA + AH2 + ATP = 2-thiouridine(34) in tRNA + L-cysteinyl-[protein] + A + AMP + diphosphate + H(+). Catalyzes the 2-thiolation of uridine at the wobble position (U34) of tRNA, leading to the formation of s(2)U34. This chain is tRNA-specific 2-thiouridylase MnmA, found in Brucella abortus (strain S19).